The sequence spans 294 residues: Maltose/maltodextrin import ATP-binding protein MalK (294 aa).

The 230-residue stretch at valine 4–isoleucine 233 folds into the ABC transporter domain. An ATP-binding site is contributed by glycine 36 to serine 43.

Belongs to the ABC transporter superfamily. Maltooligosaccharide importer (TC 3.A.1.1.1) family. As to quaternary structure, the complex is composed of two ATP-binding proteins (MalK), two transmembrane proteins (MalG and MalK) and a solute-binding protein (MalE).

Its subcellular location is the cell inner membrane. The enzyme catalyses D-maltose(out) + ATP + H2O = D-maltose(in) + ADP + phosphate + H(+). Functionally, part of the ABC transporter complex MalEFGK involved in maltose/maltodextrin import. Responsible for energy coupling to the transport system. This Klebsiella aerogenes (Enterobacter aerogenes) protein is Maltose/maltodextrin import ATP-binding protein MalK.